The chain runs to 350 residues: Thymidine kinase (350 aa).

15-22 (GAHGLGKT) is an ATP binding site. Glutamate 44 functions as the Proton acceptor in the catalytic mechanism. Residue glutamine 88 coordinates substrate. ATP is bound at residue arginine 178. Residue arginine 184 participates in substrate binding.

This sequence belongs to the herpesviridae thymidine kinase family. As to quaternary structure, homodimer.

It catalyses the reaction thymidine + ATP = dTMP + ADP + H(+). In terms of biological role, catalyzes the transfer of the gamma-phospho group of ATP to thymidine to generate dTMP in the salvage pathway of pyrimidine synthesis. The dTMP serves as a substrate for DNA polymerase during viral DNA replication. Allows the virus to be reactivated and to grow in non-proliferative cells lacking a high concentration of phosphorylated nucleic acid precursors. The polypeptide is Thymidine kinase (Bos taurus (Bovine)).